We begin with the raw amino-acid sequence, 630 residues long: 1,4-alpha-glucan branching enzyme GlgB (630 aa).

The Nucleophile role is filled by D308. Catalysis depends on E361, which acts as the Proton donor.

This sequence belongs to the glycosyl hydrolase 13 family. GlgB subfamily. In terms of assembly, monomer.

The catalysed reaction is Transfers a segment of a (1-&gt;4)-alpha-D-glucan chain to a primary hydroxy group in a similar glucan chain.. It functions in the pathway glycan biosynthesis; glycogen biosynthesis. Functionally, catalyzes the formation of the alpha-1,6-glucosidic linkages in glycogen by scission of a 1,4-alpha-linked oligosaccharide from growing alpha-1,4-glucan chains and the subsequent attachment of the oligosaccharide to the alpha-1,6 position. This chain is 1,4-alpha-glucan branching enzyme GlgB, found in Halothermothrix orenii (strain H 168 / OCM 544 / DSM 9562).